Reading from the N-terminus, the 220-residue chain is Probable pterin-4-alpha-carbinolamine dehydratase, chloroplastic (220 aa).

The transit peptide at Met-1 to Arg-50 directs the protein to the chloroplast.

The protein belongs to the pterin-4-alpha-carbinolamine dehydratase family. Interacts with SDIR1. Interacts with AIRP2. In terms of processing, ubiquitinated by SDIR1. Ubiquitination leads to its subsequent degradation, thus controlling abscisic acid (ABA) signaling. Ubiquitinated by AIRP2. Ubiquitination leads to its subsequent degradation, thus controlling abscisic acid (ABA) signaling during drought stress.

It localises to the plastid. Its subcellular location is the chloroplast. The protein localises to the cell membrane. It is found in the nucleus. The catalysed reaction is (4aS,6R)-4a-hydroxy-L-erythro-5,6,7,8-tetrahydrobiopterin = (6R)-L-erythro-6,7-dihydrobiopterin + H2O. Its function is as follows. Involved in tetrahydrobiopterin biosynthesis. Interacts with and acts downstream of the E3 ubiquitin-protein ligase SDIR1 in abscisic acid (ABA) and salt stress signaling. Regulates the expression of the bZIP transcription factor ABI5, which mediates responses to ABA during seed germination and salt stress. The SDIR1-ATP1/SDIRIP1 complex plays an important role in ABA signaling through the ubiquitination pathway. Acts downstream of AIRP2 in regulation of ABA signaling during drought stress. The polypeptide is Probable pterin-4-alpha-carbinolamine dehydratase, chloroplastic (Arabidopsis thaliana (Mouse-ear cress)).